The sequence spans 375 residues: G-protein coupled estrogen receptor 1 (375 aa).

Met1 carries the post-translational modification N-acetylmethionine. Topologically, residues 1–62 (MDVTSQARGV…QQYVIGLFLS (62 aa)) are extracellular. 3 N-linked (GlcNAc...) asparagine glycosylation sites follow: Asn25, Asn32, and Asn44. Residues 63–84 (CLYTIFLFPIGFVGNILILVVN) form a helical membrane-spanning segment. At 85-96 (ISFREKMTIPDL) the chain is on the cytoplasmic side. Residues 97–120 (YFINLAVADLILVADSLIEVFNLH) form a helical membrane-spanning segment. Topologically, residues 121-132 (ERYYDIAVLCTF) are extracellular. The cysteines at positions 130 and 207 are disulfide-linked. The chain crosses the membrane as a helical span at residues 133 to 153 (MSLFLQVNMYSSVFFLTWMSF). At 154–175 (DRYIALARAMRCSLFRTKHHAR) the chain is on the cytoplasmic side. Residues 176-194 (LSCGLIWMASVSATLVPFT) form a helical membrane-spanning segment. Residues 195 to 220 (AVHLQHTDEACFCFADVREVQWLEVT) are Extracellular-facing. Residues 221–236 (LGFIVPFAIIGLCYSL) form a helical membrane-spanning segment. Over 237–259 (IVRVLVRAHRHRGLRPRRQKALR) the chain is Cytoplasmic. A helical transmembrane segment spans residues 260-280 (MILAVVLVFFVCWLPENVFIS). At 281 to 306 (VHLLQRTQPGAAPCKQSFRHAHPLTG) the chain is on the extracellular side. The helical transmembrane segment at 307 to 327 (HIVNLAAFSNSCLNPLIYSFL) threads the bilayer. Residues 328 to 375 (GETFRDKLRLYIEQKTNLPALNRFCHAALKAVIPDSTEQSDVRFSSAV) lie on the Cytoplasmic side of the membrane.

Belongs to the G-protein coupled receptor 1 family. Homodimer. Heterodimer; heterodimerizes with other G-protein-coupled receptor (GPCRs) like CRHR1, HTR1A and PAQR8. Interacts (via C-terminus tail motif) with DLG4 (via N-terminus tandem pair of PDZ domains); the interaction is direct and induces the increase of GPER1 protein levels residing at the plasma membrane surface in a estradiol-independent manner. Interacts with RAMP3; the interaction confers proper subcellular localization and function in cardioprotection. Interacts with KRT7 and KRT8. Interacts with EGFR; the interaction increases after agonist-induced stimulation in cancer-associated fibroblasts (CAF). Interacts with EGFR and ESR1. In terms of processing, ubiquitinated; ubiquitination occurs at the plasma membrane and leads to proteasome-mediated degradation. Glycosylated. As to expression, expressed in placenta, endothelial and epithelial cells, non laboring and laboring term myometrium, fibroblasts and cancer-associated fibroblasts (CAF), prostate cancer cells and invasive adenocarcinoma (at protein level). Ubiquitously expressed, but is most abundant in placenta. In brain regions, expressed as a 2.8 kb transcript in basal forebrain, frontal cortex, thalamus, hippocampus, caudate and putamen.

The protein localises to the nucleus. Its subcellular location is the cytoplasm. It localises to the perinuclear region. It is found in the cytoskeleton. The protein resides in the cell membrane. The protein localises to the basolateral cell membrane. Its subcellular location is the cytoplasmic vesicle membrane. It localises to the early endosome. It is found in the recycling endosome. The protein resides in the golgi apparatus membrane. The protein localises to the golgi apparatus. Its subcellular location is the trans-Golgi network. It localises to the endoplasmic reticulum membrane. It is found in the cell projection. The protein resides in the dendrite. The protein localises to the dendritic spine membrane. Its subcellular location is the axon. It localises to the postsynaptic density. It is found in the mitochondrion membrane. G-protein coupled estrogen receptor that binds to 17-beta-estradiol (E2) with high affinity, leading to rapid and transient activation of numerous intracellular signaling pathways. Stimulates cAMP production, calcium mobilization and tyrosine kinase Src inducing the release of heparin-bound epidermal growth factor (HB-EGF) and subsequent transactivation of the epidermal growth factor receptor (EGFR), activating downstream signaling pathways such as PI3K/Akt and ERK/MAPK. Mediates pleiotropic functions among others in the cardiovascular, endocrine, reproductive, immune and central nervous systems. Has a role in cardioprotection by reducing cardiac hypertrophy and perivascular fibrosis in a RAMP3-dependent manner. Regulates arterial blood pressure by stimulating vasodilation and reducing vascular smooth muscle and microvascular endothelial cell proliferation. Plays a role in blood glucose homeostasis contributing to the insulin secretion response by pancreatic beta cells. Triggers mitochondrial apoptosis during pachytene spermatocyte differentiation. Stimulates uterine epithelial cell proliferation. Enhances uterine contractility in response to oxytocin. Contributes to thymic atrophy by inducing apoptosis. Attenuates TNF-mediated endothelial expression of leukocyte adhesion molecules. Promotes neuritogenesis in developing hippocampal neurons. Plays a role in acute neuroprotection against NMDA-induced excitotoxic neuronal death. Increases firing activity and intracellular calcium oscillations in luteinizing hormone-releasing hormone (LHRH) neurons. Inhibits early osteoblast proliferation at growth plate during skeletal development. Inhibits mature adipocyte differentiation and lipid accumulation. Involved in the recruitment of beta-arrestin 2 ARRB2 at the plasma membrane in epithelial cells. Also functions as a receptor for aldosterone mediating rapid regulation of vascular contractibility through the PI3K/ERK signaling pathway. Involved in cancer progression regulation. Stimulates cancer-associated fibroblast (CAF) proliferation by a rapid genomic response through the EGFR/ERK transduction pathway. Associated with EGFR, may act as a transcription factor activating growth regulatory genes (c-fos, cyclin D1). Promotes integrin alpha-5/beta-1 and fibronectin (FN) matrix assembly in breast cancer cells. The protein is G-protein coupled estrogen receptor 1 of Homo sapiens (Human).